Here is a 299-residue protein sequence, read N- to C-terminus: MSSSKPLIIVLLGPTASGKTALGIEIAEHLGLEIHNVDSRQVYMDMDIGTAKPSQEQQKRIRHFLIDLKPPNEKMTMHDFHKTARVSLDNALNKTNVGLLVGGSGLYLKALTSGLCPPSIPPESSFRKQLHDIGQEQCYQLLQSCDPLSAKTIAPSDSVRTTRALEVFYATGQSKTSLQSSKPPPWRLLELGLNPSNLNDRIAQRTENIFQNGLIEETEHLIGKFGKELPLLNTIGYAEASQMIDGKLPLNDAIFQTNKRTKQFAKRQKTWFRGQHNPKWLNEKNPLSEALSLIHNVIR.

ATP is bound at residue 13 to 20; the sequence is GPTASGKT. 15 to 20 contributes to the substrate binding site; that stretch reads TASGKT. Residues 38 to 41 are interaction with substrate tRNA; that stretch reads DSRQ.

It belongs to the IPP transferase family. In terms of assembly, monomer. It depends on Mg(2+) as a cofactor.

The catalysed reaction is adenosine(37) in tRNA + dimethylallyl diphosphate = N(6)-dimethylallyladenosine(37) in tRNA + diphosphate. Functionally, catalyzes the transfer of a dimethylallyl group onto the adenine at position 37 in tRNAs that read codons beginning with uridine, leading to the formation of N6-(dimethylallyl)adenosine (i(6)A). This is tRNA dimethylallyltransferase from Prochlorococcus marinus (strain MIT 9211).